We begin with the raw amino-acid sequence, 440 residues long: Thymidine phosphorylase (440 aa).

It belongs to the thymidine/pyrimidine-nucleoside phosphorylase family. Homodimer.

It carries out the reaction thymidine + phosphate = 2-deoxy-alpha-D-ribose 1-phosphate + thymine. It participates in pyrimidine metabolism; dTMP biosynthesis via salvage pathway; dTMP from thymine: step 1/2. The enzymes which catalyze the reversible phosphorolysis of pyrimidine nucleosides are involved in the degradation of these compounds and in their utilization as carbon and energy sources, or in the rescue of pyrimidine bases for nucleotide synthesis. The protein is Thymidine phosphorylase of Shigella boydii serotype 4 (strain Sb227).